A 126-amino-acid chain; its full sequence is Small ribosomal subunit protein uS13 (126 aa).

The disordered stretch occupies residues 92-126 (HRRGLPVRGQRTKTNARTRKGPKKTVAGKKKATRK).

Belongs to the universal ribosomal protein uS13 family. Part of the 30S ribosomal subunit. Forms a loose heterodimer with protein S19. Forms two bridges to the 50S subunit in the 70S ribosome.

Its function is as follows. Located at the top of the head of the 30S subunit, it contacts several helices of the 16S rRNA. In the 70S ribosome it contacts the 23S rRNA (bridge B1a) and protein L5 of the 50S subunit (bridge B1b), connecting the 2 subunits; these bridges are implicated in subunit movement. Contacts the tRNAs in the A and P-sites. In Deinococcus radiodurans (strain ATCC 13939 / DSM 20539 / JCM 16871 / CCUG 27074 / LMG 4051 / NBRC 15346 / NCIMB 9279 / VKM B-1422 / R1), this protein is Small ribosomal subunit protein uS13.